A 355-amino-acid chain; its full sequence is UDP-3-O-acylglucosamine N-acyltransferase (355 aa).

H258 functions as the Proton acceptor in the catalytic mechanism.

The protein belongs to the transferase hexapeptide repeat family. LpxD subfamily. Homotrimer.

The enzyme catalyses a UDP-3-O-[(3R)-3-hydroxyacyl]-alpha-D-glucosamine + a (3R)-hydroxyacyl-[ACP] = a UDP-2-N,3-O-bis[(3R)-3-hydroxyacyl]-alpha-D-glucosamine + holo-[ACP] + H(+). It participates in bacterial outer membrane biogenesis; LPS lipid A biosynthesis. Its function is as follows. Catalyzes the N-acylation of UDP-3-O-acylglucosamine using 3-hydroxyacyl-ACP as the acyl donor. Is involved in the biosynthesis of lipid A, a phosphorylated glycolipid that anchors the lipopolysaccharide to the outer membrane of the cell. This is UDP-3-O-acylglucosamine N-acyltransferase from Bradyrhizobium sp. (strain ORS 278).